The following is a 319-amino-acid chain: Lipoyl synthase (319 aa).

The interval 1–29 (MVVVVDTVSDKPIRPRHPEKAARPDALSP) is disordered. Residues 8–29 (VSDKPIRPRHPEKAARPDALSP) show a composition bias toward basic and acidic residues. Residues cysteine 61, cysteine 66, cysteine 72, cysteine 87, cysteine 91, cysteine 94, and serine 300 each coordinate [4Fe-4S] cluster. A Radical SAM core domain is found at 73-289 (WDRKHATFMI…ESLAYAKGFL (217 aa)).

Belongs to the radical SAM superfamily. Lipoyl synthase family. It depends on [4Fe-4S] cluster as a cofactor.

It is found in the cytoplasm. It carries out the reaction [[Fe-S] cluster scaffold protein carrying a second [4Fe-4S](2+) cluster] + N(6)-octanoyl-L-lysyl-[protein] + 2 oxidized [2Fe-2S]-[ferredoxin] + 2 S-adenosyl-L-methionine + 4 H(+) = [[Fe-S] cluster scaffold protein] + N(6)-[(R)-dihydrolipoyl]-L-lysyl-[protein] + 4 Fe(3+) + 2 hydrogen sulfide + 2 5'-deoxyadenosine + 2 L-methionine + 2 reduced [2Fe-2S]-[ferredoxin]. It participates in protein modification; protein lipoylation via endogenous pathway; protein N(6)-(lipoyl)lysine from octanoyl-[acyl-carrier-protein]: step 2/2. In terms of biological role, catalyzes the radical-mediated insertion of two sulfur atoms into the C-6 and C-8 positions of the octanoyl moiety bound to the lipoyl domains of lipoate-dependent enzymes, thereby converting the octanoylated domains into lipoylated derivatives. The polypeptide is Lipoyl synthase (Rhodopseudomonas palustris (strain BisA53)).